A 374-amino-acid chain; its full sequence is MLSKQISNLNSSSNKPKILSLFSGCGGLDLGFHQAGCETVWANDFSHWACESFRKNIGDVIVEGDIEQINPNDPTIPDCDIILGGFPCQDFSMIWKQPGLEGERGNLYKSFLRFVNAKKPKVFVAENVKGLLTANKKKAIQQIITDFENCGYYVQANVYNFAEFGVPQFRERVLIVGVRLDTGFDFRHPEPTHNETGENGLKPYVTAGQAISNIPQNASNNELLKISDKTRRMLELIPEGGNFTDIPKDHPLYVKGMISHVYRRMHRNEPSKTIIAAGGGGTWGYHFPEPRAFTNRERARLQSFPDDFEFVGSTTEVRRQIGNAVPPQGVVELAKSILPIFSDNYEKVDLHEKLVEEKEILFHDRLSKIRGGKQ.

One can recognise an SAM-dependent MTase C5-type domain in the interval 16-344 (PKILSLFSGC…KSILPIFSDN (329 aa)). Residue C88 is part of the active site.

Belongs to the class I-like SAM-binding methyltransferase superfamily. C5-methyltransferase family.

The enzyme catalyses a 2'-deoxycytidine in DNA + S-adenosyl-L-methionine = a 5-methyl-2'-deoxycytidine in DNA + S-adenosyl-L-homocysteine + H(+). A methylase, recognizes the double-stranded sequence 5'-GCSGC-3', methylates C-5 on both strands, and protects the DNA from cleavage by the NgoFVII endonuclease. The polypeptide is Type II methyltransferase M.NgoFVII (ngoFVIIM) (Neisseria gonorrhoeae).